Here is a 264-residue protein sequence, read N- to C-terminus: NAD-capped RNA hydrolase NudC (264 aa).

Arginine 70 is a substrate binding site. Positions 99 and 102 each coordinate Zn(2+). Substrate is bound at residue glutamate 112. Zn(2+) contacts are provided by cysteine 117 and cysteine 122. Tyrosine 127 is a substrate binding site. The region spanning 128-252 (PVICPCIIVA…TIALKLIEHT (125 aa)) is the Nudix hydrolase domain. Positions 161, 177, and 181 each coordinate a divalent metal cation. Positions 162–183 (GFVEVGETFEQAVHREVLEETG) match the Nudix box motif. 195–202 (QPWAFPNS) is a substrate binding site. Glutamate 222 serves as a coordination point for a divalent metal cation. Alanine 245 is a substrate binding site.

Belongs to the Nudix hydrolase family. NudC subfamily. In terms of assembly, homodimer. The cofactor is Mg(2+). Mn(2+) serves as cofactor. Zn(2+) is required as a cofactor.

The catalysed reaction is a 5'-end NAD(+)-phospho-ribonucleoside in mRNA + H2O = a 5'-end phospho-adenosine-phospho-ribonucleoside in mRNA + beta-nicotinamide D-ribonucleotide + 2 H(+). It catalyses the reaction NAD(+) + H2O = beta-nicotinamide D-ribonucleotide + AMP + 2 H(+). The enzyme catalyses NADH + H2O = reduced beta-nicotinamide D-ribonucleotide + AMP + 2 H(+). Functionally, mRNA decapping enzyme that specifically removes the nicotinamide adenine dinucleotide (NAD) cap from a subset of mRNAs by hydrolyzing the diphosphate linkage to produce nicotinamide mononucleotide (NMN) and 5' monophosphate mRNA. The NAD-cap is present at the 5'-end of some mRNAs and stabilizes RNA against 5'-processing. Has preference for mRNAs with a 5'-end purine. Catalyzes the hydrolysis of a broad range of dinucleotide pyrophosphates. The polypeptide is NAD-capped RNA hydrolase NudC (Pasteurella multocida (strain Pm70)).